Consider the following 76-residue polypeptide: Probable insulin-like peptide alpha-type 3 (76 aa).

The N-terminal stretch at 1 to 18 is a signal peptide; that stretch reads MFVLLIILSIILAQVTDA. 3 disulfide bridges follow: C28-C58, C40-C71, and C46-C72.

Belongs to the insulin family.

It is found in the secreted. The chain is Probable insulin-like peptide alpha-type 3 (ins-23) from Caenorhabditis elegans.